Here is a 379-residue protein sequence, read N- to C-terminus: Leukocyte elastase inhibitor (379 aa).

Methionine 1 is modified (N-acetylmethionine). Lysine 137 and lysine 177 each carry N6-acetyllysine. Residue serine 300 is modified to Phosphoserine. The interval 351 to 379 is CARD-binding motif (CBM); the sequence is NFTADHPFLFFIRHNSSGSILFLGRFSSP.

Belongs to the serpin family. Ov-serpin subfamily. As to quaternary structure, monomer. Interacts (via C-terminus) with CASP1; CASP4 (via CARD domain) and CASP5; these interactions regulate the activity of inflammatory caspases. Interacts with PRTN3. Interacts with GZMH. In terms of tissue distribution, in human bone marrow, present in all CD45+ populations. Expression levels are highest in the neutrophil lineage, intermediate in monocytic, and lowest in lymphocytic lineage. Within the neutrophil lineage, expression is highest in promyelocytes.

It is found in the secreted. The protein localises to the cytoplasm. It localises to the cytolytic granule. The protein resides in the early endosome. Neutrophil serine protease inhibitor that plays an essential role in the regulation of the innate immune response, inflammation and cellular homeostasis. Acts primarily to protect the cell from proteases released in the cytoplasm during stress or infection. These proteases are important in killing microbes but when released from granules, these potent enzymes also destroy host proteins and contribute to mortality. Regulates the activity of the neutrophil proteases elastase, cathepsin G, proteinase-3, chymase, chymotrypsin, and kallikrein-3. Also acts as a potent intracellular inhibitor of GZMH by directly blocking its proteolytic activity. During inflammation, limits the activity of inflammatory caspases CASP1, CASP4 and CASP5 by suppressing their caspase-recruitment domain (CARD) oligomerization and enzymatic activation. When secreted, promotes the proliferation of beta-cells via its protease inhibitory function. This Homo sapiens (Human) protein is Leukocyte elastase inhibitor (SERPINB1).